The primary structure comprises 857 residues: Dimethylglycine dehydrogenase, mitochondrial (857 aa).

The N-terminal 43 residues, 1-43 (MLRLGALRLRGLALRSSQGRPSSAGLREGQESPPSPPEWKDRA), are a transit peptide targeting the mitochondrion. The tract at residues 15 to 39 (RSSQGRPSSAGLREGQESPPSPPEW) is disordered. Residues 52–53 (CV), 73–74 (EK), and 80–88 (GSTWHAAGL) each bind FAD. Tele-8alpha-FAD histidine is present on histidine 84. Lysine 107 is subject to N6-acetyllysine. Lysine 141 carries the post-translational modification N6-acetyllysine; alternate. At lysine 141 the chain carries N6-succinyllysine; alternate. Lysine 161 carries the N6-acetyllysine modification. Valine 212 serves as a coordination point for FAD. Lysine 216 carries the N6-acetyllysine modification. Tryptophan 244 serves as a coordination point for FAD. Lysine 310 and lysine 312 each carry N6-succinyllysine. An N6-acetyllysine mark is found at lysine 328 and lysine 353. 390-395 (FGYGII) lines the FAD pocket. N6-acetyllysine; alternate is present on residues lysine 427, lysine 469, and lysine 516. 3 positions are modified to N6-succinyllysine; alternate: lysine 427, lysine 469, and lysine 516. 573–575 (ELT) contacts (6S)-5,6,7,8-tetrahydrofolate. Lysine 648 is modified (N6-acetyllysine; alternate). Residue lysine 648 is modified to N6-succinyllysine; alternate. Residues tyrosine 669, 676–678 (ELY), and tyrosine 737 contribute to the (6S)-5,6,7,8-tetrahydrofolate site. Lysine 757 is subject to N6-acetyllysine. Position 786 is an N6-acetyllysine; alternate (lysine 786). Lysine 786 is modified (N6-succinyllysine; alternate). Lysine 788 carries the post-translational modification N6-succinyllysine.

The protein belongs to the GcvT family. Requires FAD as cofactor.

It is found in the mitochondrion. The catalysed reaction is (6S)-5,6,7,8-tetrahydrofolyl-(gamma-L-Glu)(n) + N,N-dimethylglycine + oxidized [electron-transfer flavoprotein] + H(+) = (6R)-5,10-methylenetetrahydrofolyl-(gamma-L-Glu)(n) + sarcosine + reduced [electron-transfer flavoprotein]. Its pathway is amine and polyamine degradation; betaine degradation; sarcosine from betaine: step 2/2. In terms of biological role, catalyzes the demethylation of N,N-dimethylglycine to sarcosine. Also has activity with sarcosine in vitro. The chain is Dimethylglycine dehydrogenase, mitochondrial (Dmgdh) from Rattus norvegicus (Rat).